We begin with the raw amino-acid sequence, 356 residues long: Alanine racemase (356 aa).

The active-site Proton acceptor; specific for D-alanine is the Lys-35. An N6-(pyridoxal phosphate)lysine modification is found at Lys-35. Residue Arg-130 coordinates substrate. Tyr-253 acts as the Proton acceptor; specific for L-alanine in catalysis. Position 301 (Met-301) interacts with substrate.

This sequence belongs to the alanine racemase family. Pyridoxal 5'-phosphate serves as cofactor.

It catalyses the reaction L-alanine = D-alanine. It functions in the pathway amino-acid biosynthesis; D-alanine biosynthesis; D-alanine from L-alanine: step 1/1. Functionally, catalyzes the interconversion of L-alanine and D-alanine. May also act on other amino acids. This is Alanine racemase (alr) from Burkholderia mallei (strain NCTC 10229).